A 515-amino-acid polypeptide reads, in one-letter code: Anterior pharynx in excess protein 1 (515 aa).

Positions 1 to 26 are cleaved as a signal peptide; that stretch reads MTNFSSLLTTIFLCIISSATGSGTIE. Over 27 to 392 the chain is Extracellular; the sequence is LLISSPQTVL…QASDELQLRL (366 aa). N-linked (GlcNAc...) asparagine glycosylation occurs at Asn-123. The region spanning 130-172 is the DSL domain; that stretch reads NLCSSNYHGKRCNRYCIANAKLHWECSTHGVRRCSAGWSGEDC. 14 disulfide bridges follow: Cys-132–Cys-141, Cys-145–Cys-155, Cys-163–Cys-172, Cys-177–Cys-187, Cys-181–Cys-193, Cys-195–Cys-204, Cys-213–Cys-218, Cys-228–Cys-237, Cys-244–Cys-256, Cys-250–Cys-268, Cys-270–Cys-279, Cys-288–Cys-300, Cys-294–Cys-310, and Cys-312–Cys-321. EGF-like domains lie at 173-205, 203-238, 240-280, and 284-322; these read SNPICAGGCSNRGRCVAPNQCSCADGFNGTRCE, RCEQCLPRAGCVNGDCVNETPNTCKCRDGFIGDRCD, DIKI…SQCK, and SKVRCSAEHVCKNGGACISMDDTNIQCKCRRGFSGKFCE. Asn-200 is a glycosylation site (N-linked (GlcNAc...) asparagine). Positions 325-349 constitute an EGF-like 5; incomplete domain; the sequence is NHGDCSAMRCSAGETCQISGDFAIC. Residues 393-413 traverse the membrane as a helical segment; that stretch reads IAAICVLFSVCVIGLALVSFF. Residues 414 to 515 lie on the Cytoplasmic side of the membrane; it reads FYMHSFSKWK…AADDESSFRV (102 aa). Disordered regions lie at residues 427-452 and 466-494; these read SQQAGGSTILPTTTSIPMSTTSSGTG and RGNAPGSSSDSEPDHHCPPPHRHSPPPAY. Over residues 431-452 the composition is skewed to low complexity; that stretch reads GGSTILPTTTSIPMSTTSSGTG.

The protein resides in the cell membrane. It localises to the nucleus. Its subcellular location is the cytoplasm. Probable ligand for lin-12/Notch and glp-1/Notch receptors and involved in the mediation of Notch signaling. Involved in the lin-12/Notch pathway signaling of cell fate in vulval precursor cells (VPCs), acting redundantly with dsl-1 and lag-2. Contributes to the establishment of the dorsal-ventral axis in early embryos. Involved in the specification of the blastomere cell ABp fate, probably acting as a signal from the P2 blastomere to the glp-1/Notch receptor on ABp and ABa. Probably acts as a signal, from the secondary vulval epithelial cells and the vulval muscle type 1 (vm1) cells, to activate the lin-12/Notch pathway in type 2 vulval muscle (vm2) cells, contributing to formation of the postsynaptic muscle plasma membrane extensions, known as muscle arms. Required for oocyte growth control, acting redundantly with lag-2, perhaps signaling via the glp-1/Notch pathway. Plays a somatic role in ovulation during adulthood, perhaps via lin-12/Notch signaling. Involved in establishing left-right asymmetry during intestinal organogenesis. This Caenorhabditis elegans protein is Anterior pharynx in excess protein 1 (apx-1).